Reading from the N-terminus, the 259-residue chain is Src-like-adapter 2 (259 aa).

The segment covering 1–20 has biased composition (low complexity); it reads MGSLSSRGKTSSPSPSSSGP. Residues 1–30 are disordered; the sequence is MGSLSSRGKTSSPSPSSSGPDQEPVSMQPE. Residue glycine 2 is the site of N-myristoyl glycine attachment. The SH3 domain occupies 31 to 91; the sequence is RHKVTAVALG…PSVYVAKVAH (61 aa). The SH2 domain maps to 93–190; sequence WLYEGLSREK…GICCPLREPC (98 aa). Residues 190-259 form an SLA C-terminal region; that stretch reads CVLQKLGPLP…SLAEDPLDDA (70 aa).

As to quaternary structure, interacts (via its C-terminal domain) with CBL (phosphorylated). Interacts (via SH2 domain) with ZAP70 (phosphorylated) and CD3Z (phosphorylated). Interacts (via SH2 domain) with CSF1R (phosphorylated). Phosphorylated by CSF1R. In terms of tissue distribution, mainly expressed in immune system. Highly expressed in spleen and thymus and expressed at intermediate levels in lung. Not expressed in liver, heart and brain. Isoform 1 is predominant in lung and spleen, while isoform 2 is predominant in thymus.

It localises to the cytoplasm. The protein localises to the cell membrane. It is found in the cytoplasmic vesicle. The protein resides in the late endosome. Its function is as follows. Adapter protein, which negatively regulates T-cell receptor (TCR) signaling. Inhibits T-cell antigen-receptor induced activation of nuclear factor of activated T-cells. May act by linking signaling proteins such as ZAP70 with CBL, leading to a CBL dependent degradation of signaling proteins. This Mus musculus (Mouse) protein is Src-like-adapter 2 (Sla2).